Consider the following 150-residue polypeptide: Cytochrome c-type biogenesis protein CcmE (150 aa).

Residues Met-1–Arg-7 are Cytoplasmic-facing. Residues Leu-8 to Ala-28 form a helical; Signal-anchor for type II membrane protein membrane-spanning segment. The Periplasmic portion of the chain corresponds to Phe-29–Arg-150. The heme site is built by His-123 and Tyr-127.

It belongs to the CcmE/CycJ family.

Its subcellular location is the cell inner membrane. Functionally, heme chaperone required for the biogenesis of c-type cytochromes. Transiently binds heme delivered by CcmC and transfers the heme to apo-cytochromes in a process facilitated by CcmF and CcmH. The protein is Cytochrome c-type biogenesis protein CcmE of Rhizobium meliloti (strain 1021) (Ensifer meliloti).